A 740-amino-acid polypeptide reads, in one-letter code: Ribosomal protein S6 kinase alpha-3 (740 aa).

The interval 1 to 38 (MPLAQLADPWQKMAVESPSDSAENGQQIMDEPMGEEEI) is disordered. The span at 18–27 (PSDSAENGQQ) shows a compositional bias: polar residues. The Protein kinase 1 domain maps to 68–327 (FELLKVLGQG…VEEIKRHSFF (260 aa)). ATP contacts are provided by residues 74–82 (LGQGSFGKV) and lysine 100. The Proton acceptor role is filled by aspartate 193. Serine 227 is subject to Phosphoserine; by PDPK1. The AGC-kinase C-terminal domain occupies 328–397 (STIDWNKLYR…VAITSDDESQ (70 aa)). At threonine 365 the chain carries Phosphothreonine. Residues serine 369 and serine 375 each carry the phosphoserine modification. Serine 386 carries the post-translational modification Phosphoserine; by autocatalysis and MAPKAPK2. Serine 415 carries the post-translational modification Phosphoserine. A Protein kinase 2 domain is found at 422–679 (YEVKEDIGVG…AALVLRHPWI (258 aa)). ATP-binding positions include 428–436 (IGVGSYSVC) and lysine 451. A Phosphotyrosine; by FGFR3 modification is found at tyrosine 529. Aspartate 539 acts as the Proton acceptor in catalysis. Phosphoserine occurs at positions 556 and 715.

The protein belongs to the protein kinase superfamily. AGC Ser/Thr protein kinase family. S6 kinase subfamily. Forms a complex with either MAPK1/ERK2 or MAPK3/ERK1 in quiescent cells. Transiently dissociates following mitogenic stimulation. Interacts with NFATC4, ETV1/ER81 and FGFR1. It depends on Mg(2+) as a cofactor. Activated by phosphorylation at Ser-227 by PDPK1. Autophosphorylated on Ser-386, as part of the activation process. May be phosphorylated at Thr-365 and Ser-369 by MAPK1/ERK2 and MAPK3/ERK1. Can also be activated via phosphorylation at Ser-386 by MAPKAPK2. Post-translationally, N-terminal myristoylation results in an activated kinase in the absence of added growth factors. In terms of tissue distribution, expressed in many tissues, highest levels in skeletal muscle.

The protein localises to the nucleus. Its subcellular location is the cytoplasm. It carries out the reaction L-seryl-[protein] + ATP = O-phospho-L-seryl-[protein] + ADP + H(+). The enzyme catalyses L-threonyl-[protein] + ATP = O-phospho-L-threonyl-[protein] + ADP + H(+). Upon extracellular signal or mitogen stimulation, phosphorylated at Thr-577 in the C-terminal kinase domain (CTKD) by MAPK1/ERK2 and MAPK3/ERK1. The activated CTKD then autophosphorylates Ser-386, allowing binding of PDPK1, which in turn phosphorylates Ser-227 in the N-terminal kinase domain (NTDK) leading to the full activation of the protein and subsequent phosphorylation of the substrates by the NTKD. Serine/threonine-protein kinase that acts downstream of ERK (MAPK1/ERK2 and MAPK3/ERK1) signaling and mediates mitogenic and stress-induced activation of the transcription factors CREB1, ETV1/ER81 and NR4A1/NUR77, regulates translation through RPS6 and EIF4B phosphorylation, and mediates cellular proliferation, survival, and differentiation by modulating mTOR signaling and repressing pro-apoptotic function of BAD and DAPK1. In fibroblast, is required for EGF-stimulated phosphorylation of CREB1 and histone H3 at 'Ser-10', which results in the subsequent transcriptional activation of several immediate-early genes. In response to mitogenic stimulation (EGF and PMA), phosphorylates and activates NR4A1/NUR77 and ETV1/ER81 transcription factors and the cofactor CREBBP. Upon insulin-derived signal, acts indirectly on the transcription regulation of several genes by phosphorylating GSK3B at 'Ser-9' and inhibiting its activity. Phosphorylates RPS6 in response to serum or EGF via an mTOR-independent mechanism and promotes translation initiation by facilitating assembly of the preinitiation complex. In response to insulin, phosphorylates EIF4B, enhancing EIF4B affinity for the EIF3 complex and stimulating cap-dependent translation. Is involved in the mTOR nutrient-sensing pathway by directly phosphorylating TSC2 at 'Ser-1798', which potently inhibits TSC2 ability to suppress mTOR signaling, and mediates phosphorylation of RPTOR, which regulates mTORC1 activity and may promote rapamycin-sensitive signaling independently of the PI3K/AKT pathway. Mediates cell survival by phosphorylating the pro-apoptotic proteins BAD and DAPK1 and suppressing their pro-apoptotic function. Promotes the survival of hepatic stellate cells by phosphorylating CEBPB in response to the hepatotoxin carbon tetrachloride (CCl4). Is involved in cell cycle regulation by phosphorylating the CDK inhibitor CDKN1B, which promotes CDKN1B association with 14-3-3 proteins and prevents its translocation to the nucleus and inhibition of G1 progression. In LPS-stimulated dendritic cells, is involved in TLR4-induced macropinocytosis, and in myeloma cells, acts as effector of FGFR3-mediated transformation signaling, after direct phosphorylation at Tyr-529 by FGFR3. Negatively regulates EGF-induced MAPK1/3 phosphorylation via phosphorylation of SOS1. Phosphorylates SOS1 at 'Ser-1134' and 'Ser-1161' that create YWHAB and YWHAE binding sites and which contribute to the negative regulation of MAPK1/3 phosphorylation. Phosphorylates EPHA2 at 'Ser-897', the RPS6KA-EPHA2 signaling pathway controls cell migration. Acts as a regulator of osteoblast differentiation by mediating phosphorylation of ATF4, thereby promoting ATF4 transactivation activity. This chain is Ribosomal protein S6 kinase alpha-3 (RPS6KA3), found in Homo sapiens (Human).